Reading from the N-terminus, the 409-residue chain is Argininosuccinate synthase (409 aa).

ATP is bound by residues 15–23 (AYSGGLDTS) and A42. Positions 93 and 98 each coordinate L-citrulline. Position 123 (G123) interacts with ATP. Positions 125, 129, and 130 each coordinate L-aspartate. N129 contacts L-citrulline. Residues R133, S182, S191, E267, and Y279 each coordinate L-citrulline.

This sequence belongs to the argininosuccinate synthase family. Type 1 subfamily. Homotetramer.

It is found in the cytoplasm. It carries out the reaction L-citrulline + L-aspartate + ATP = 2-(N(omega)-L-arginino)succinate + AMP + diphosphate + H(+). It functions in the pathway amino-acid biosynthesis; L-arginine biosynthesis; L-arginine from L-ornithine and carbamoyl phosphate: step 2/3. The sequence is that of Argininosuccinate synthase from Desulfitobacterium hafniense (strain Y51).